Reading from the N-terminus, the 153-residue chain is Large ribosomal subunit protein uL13 (153 aa).

The protein belongs to the universal ribosomal protein uL13 family. Part of the 50S ribosomal subunit.

Functionally, this protein is one of the early assembly proteins of the 50S ribosomal subunit, although it is not seen to bind rRNA by itself. It is important during the early stages of 50S assembly. The polypeptide is Large ribosomal subunit protein uL13 (Methylobacterium sp. (strain 4-46)).